Here is a 307-residue protein sequence, read N- to C-terminus: Actin maturation protease (307 aa).

Residues 1-34 (MSLENDAAAPPPPPLPPPPPPQPPSLARSESSKK) are disordered. Positions 9-24 (APPPPPLPPPPPPQPP) are enriched in pro residues. The peptidase C39-like stretch occupies residues 80–200 (SLIQDGPQCG…WAVASGILLG (121 aa)). Residue C88 is part of the active site.

The protein belongs to the ACTMAP family.

It is found in the cytoplasm. It catalyses the reaction N-terminal N(alpha)-acetyl-L-methionyl-L-aspartyl-[protein] + H2O = N-terminal L-aspartyl-[protein] + N-acetyl-L-methionine. The catalysed reaction is N-terminal N(alpha)-acetyl-L-methionyl-L-glutamyl-[protein] + H2O = N-terminal L-glutamyl-[protein] + N-acetyl-L-methionine. It carries out the reaction N-terminal N(alpha)-acetyl-L-cysteinyl-L-aspartyl-[protein] + H2O = N-terminal L-aspartyl-[protein] + N-acetyl-L-cysteine. The enzyme catalyses N-terminal N(alpha)-acetyl-L-cysteinyl-L-glutamyl-[protein] + H2O = N-terminal L-glutamyl-[protein] + N-acetyl-L-cysteine. In terms of biological role, actin maturation protease that specifically mediates the cleavage of immature acetylated N-terminal actin, thereby contributing to actin maturation. Cleaves N-terminal acetylated methionine of immature cytoplasmic actin after translation. Cleaves N-terminal acetylated cysteine of muscle actin after canonical removal of N-terminal methionine. The protein is Actin maturation protease of Danio rerio (Zebrafish).